Consider the following 455-residue polypeptide: Serine incorporator 2 (455 aa).

A run of 11 helical transmembrane segments spans residues 5–27 (LGAC…ILCS), 40–57 (LIFT…IIML), 96–118 (AVYR…MLCV), 131–150 (GFWF…AFYI), 160–182 (FYFG…IDFA), 202–224 (YAGL…ALMF), 239–256 (FISL…AAVL), 268–290 (LLQA…SSIP), 317–339 (QWWD…FISL), 385–407 (TYSY…MTLT), and 422–444 (WTAV…WTLV).

The protein belongs to the TDE1 family.

The protein localises to the cell membrane. It catalyses the reaction a 1,2-diacyl-sn-glycero-3-phospho-L-serine(in) = a 1,2-diacyl-sn-glycero-3-phospho-L-serine(out). It carries out the reaction a 1,2-diacyl-sn-glycero-3-phosphocholine(in) = a 1,2-diacyl-sn-glycero-3-phosphocholine(out). The enzyme catalyses a 1,2-diacyl-sn-glycero-3-phosphoethanolamine(in) = a 1,2-diacyl-sn-glycero-3-phosphoethanolamine(out). Its function is as follows. Non-ATP-dependent, non-specific lipid transporter for phosphatidylserine, phosphatidylcholine, and phosphatidylethanolamine. Functions as a scramblase that flips lipids in both directions across the membrane. In contrast to SERINC3 and SERINC5, has no effect on HIV-1 particles infectivity. The protein is Serine incorporator 2 of Homo sapiens (Human).